Here is a 669-residue protein sequence, read N- to C-terminus: Coagulation factor XIII B chain (669 aa).

The first 21 residues, Met1 to Ala21, serve as a signal peptide directing secretion. Sushi domains lie at Gln25–Tyr89, Lys90–Lys149, Glu152–Lys211, Leu212–Gly270, Asn273–Glu330, Val335–Glu392, Glu395–Glu453, Pro454–Ile517, Gly523–Glu581, and Pro582–Thr648. Intrachain disulfides connect Cys26–Cys77, Cys60–Cys88, Cys92–Cys136, Cys119–Cys147, Cys154–Cys198, Cys181–Cys209, Cys214–Cys256, Cys242–Cys268, Cys275–Cys317, Cys303–Cys328, Cys337–Cys379, Cys365–Cys390, Cys397–Cys440, Cys426–Cys451, Cys455–Cys506, Cys487–Cys516, Cys525–Cys568, Cys554–Cys579, Cys583–Cys637, and Cys617–Cys647. Asn163 carries N-linked (GlcNAc...) asparagine glycosylation. Asn546 is a glycosylation site (N-linked (GlcNAc...) asparagine).

In terms of assembly, tetramer of two A chains (F13A1) and two B (F13B) chains. In terms of tissue distribution, predominantly expressed in liver and kidney.

It localises to the secreted. The B chain of factor XIII is not catalytically active, but is thought to stabilize the A subunits and regulate the rate of transglutaminase formation by thrombin. The chain is Coagulation factor XIII B chain (F13b) from Mus musculus (Mouse).